The following is an 837-amino-acid chain: Protein translocase subunit SecA (837 aa).

ATP contacts are provided by residues glutamine 83, 101–105 (GEGKT), and aspartate 494.

The protein belongs to the SecA family. As to quaternary structure, monomer and homodimer. Part of the essential Sec protein translocation apparatus which comprises SecA, SecYEG and auxiliary proteins SecDF. Other proteins may also be involved.

It localises to the cell membrane. The protein localises to the cytoplasm. The enzyme catalyses ATP + H2O + cellular proteinSide 1 = ADP + phosphate + cellular proteinSide 2.. Part of the Sec protein translocase complex. Interacts with the SecYEG preprotein conducting channel. Has a central role in coupling the hydrolysis of ATP to the transfer of proteins into and across the cell membrane, serving as an ATP-driven molecular motor driving the stepwise translocation of polypeptide chains across the membrane. The protein is Protein translocase subunit SecA of Ureaplasma parvum serovar 3 (strain ATCC 27815 / 27 / NCTC 11736).